The sequence spans 539 residues: Probable quinate permease (539 aa).

At 1 to 22 (MSILSMVEDRPTPKEVYNWRIY) the chain is on the cytoplasmic side. A helical membrane pass occupies residues 23–43 (LLAAVASFTSCMIGYDSAFIG). The Extracellular portion of the chain corresponds to 44 to 74 (TTISLDSFKNEFHWDSMSTAKQNLVSANIVS). Residues 75-95 (CYQAGAFFGAFFAYPIGHFWG) form a helical membrane-spanning segment. Topologically, residues 96 to 97 (RK) are cytoplasmic. The chain crosses the membrane as a helical span at residues 98–118 (WGLMLSALVFTLGAGLMLGAN). The Extracellular portion of the chain corresponds to 119-130 (GDRGLGLIYGGR). Residues 131–151 (VLAGLGVGAGSNFTPIYISEL) traverse the membrane as a helical segment. Residues 152 to 159 (APPAIRGR) lie on the Cytoplasmic side of the membrane. Residues 160-180 (LVGVYELGWQVGGLVGFWINY) traverse the membrane as a helical segment. At 181 to 193 (GVEQTMAPSHKQW) the chain is on the extracellular side. The chain crosses the membrane as a helical span at residues 194–214 (LIPFAVQLIPAGLLIIGILFV). The Cytoplasmic portion of the chain corresponds to 215-285 (KESPRWLFLR…AWTNKRILYR (71 aa)). A helical transmembrane segment spans residues 286 to 306 (LFLGSMLFFWQNGSGINAINY). Residues 307 to 325 (YSPTVFKSIGLKGNSSSLL) are Extracellular-facing. The helical transmembrane segment at 326–346 (TTGIFGVVKTVVTIVWLLYLI) threads the bilayer. The Cytoplasmic segment spans residues 347–352 (DHVGRR). A helical membrane pass occupies residues 353 to 373 (LLLLIGAAGGSICMWIVGAYI). Topologically, residues 374 to 387 (KVVDPTHNQSDHLN) are extracellular. The chain crosses the membrane as a helical span at residues 388-408 (GGGVAAIFFFYLWTAFYTPSW). Over 409–456 (NGTPWVINSEMFDPNIRSLAQACAAGSNWLWNFLISRFTPQMFAKMDY) the chain is Cytoplasmic. The helical transmembrane segment at 457 to 477 (GVYFFFASLMLLSIPFVFFLV) threads the bilayer. Residues 478–539 (PETKGIPLEN…EQVEDTDRKE (62 aa)) are Extracellular-facing.

This sequence belongs to the major facilitator superfamily. Sugar transporter (TC 2.A.1.1) family. Interacts with creB. In terms of processing, ubiquitinated. Deubiquitinated by creB, probably to control its activity or amount.

The protein resides in the cell membrane. Its function is as follows. Integral membrane transporter that imports quinic acid to be catabolized as a carbon source. The sequence is that of Probable quinate permease (qutD) from Aspergillus niger (strain ATCC MYA-4892 / CBS 513.88 / FGSC A1513).